Here is a 202-residue protein sequence, read N- to C-terminus: MADPRVEELPDEEVPKTNVEDAGSDSESEAGEEPTIPGGAAVAVHSRNEKKARKAIGKLGLKLVPGITRVTFRRPKNILFVINQPEVYRSPSSNTWIIFGEAKIEDLNAQAQASAAQQLAAQEAAQEHAGHEHEDILGKAKEPEAEKKEAEEDDGEEVDESGLEAKDIELVMAQANVSRKKAVKALRENDNDIVNSIMALSI.

The span at 1–19 (MADPRVEELPDEEVPKTNV) shows a compositional bias: basic and acidic residues. Positions 1-44 (MADPRVEELPDEEVPKTNVEDAGSDSESEAGEEPTIPGGAAVAV) are disordered. Residues 22 to 32 (AGSDSESEAGE) are compositionally biased toward acidic residues. The NAC-A/B domain maps to 46 to 111 (SRNEKKARKA…AKIEDLNAQA (66 aa)). A disordered region spans residues 118–165 (QLAAQEAAQEHAGHEHEDILGKAKEPEAEKKEAEEDDGEEVDESGLEA). Residues 125–150 (AQEHAGHEHEDILGKAKEPEAEKKEA) are compositionally biased toward basic and acidic residues. The span at 151–162 (EEDDGEEVDESG) shows a compositional bias: acidic residues. One can recognise a UBA domain in the interval 163 to 202 (LEAKDIELVMAQANVSRKKAVKALRENDNDIVNSIMALSI).

This sequence belongs to the NAC-alpha family. Part of the nascent polypeptide-associated complex (NAC), consisting of egd2 and egd1. NAC associates with ribosomes via egd1.

Its subcellular location is the cytoplasm. It is found in the nucleus. Component of the nascent polypeptide-associated complex (NAC), a dynamic component of the ribosomal exit tunnel, protecting the emerging polypeptides from interaction with other cytoplasmic proteins to ensure appropriate nascent protein targeting. The NAC complex also promotes mitochondrial protein import by enhancing productive ribosome interactions with the outer mitochondrial membrane and blocks the inappropriate interaction of ribosomes translating non-secretory nascent polypeptides with translocation sites in the membrane of the endoplasmic reticulum. Egd2 may also be involved in transcription regulation. The protein is Nascent polypeptide-associated complex subunit alpha (egd2) of Aspergillus terreus (strain NIH 2624 / FGSC A1156).